The sequence spans 361 residues: Chorismate synthase (361 aa).

Positions 48 and 54 each coordinate NADP(+). Residues 125-127 (RSS), 238-239 (NA), glycine 278, 293-297 (KPTSS), and arginine 319 contribute to the FMN site.

It belongs to the chorismate synthase family. In terms of assembly, homotetramer. It depends on FMNH2 as a cofactor.

The catalysed reaction is 5-O-(1-carboxyvinyl)-3-phosphoshikimate = chorismate + phosphate. It participates in metabolic intermediate biosynthesis; chorismate biosynthesis; chorismate from D-erythrose 4-phosphate and phosphoenolpyruvate: step 7/7. Catalyzes the anti-1,4-elimination of the C-3 phosphate and the C-6 proR hydrogen from 5-enolpyruvylshikimate-3-phosphate (EPSP) to yield chorismate, which is the branch point compound that serves as the starting substrate for the three terminal pathways of aromatic amino acid biosynthesis. This reaction introduces a second double bond into the aromatic ring system. The sequence is that of Chorismate synthase from Vibrio vulnificus (strain YJ016).